Consider the following 463-residue polypeptide: Asparagine--tRNA ligase (463 aa).

Belongs to the class-II aminoacyl-tRNA synthetase family. In terms of assembly, homodimer.

It is found in the cytoplasm. It carries out the reaction tRNA(Asn) + L-asparagine + ATP = L-asparaginyl-tRNA(Asn) + AMP + diphosphate + H(+). This is Asparagine--tRNA ligase from Desulfitobacterium hafniense (strain Y51).